The following is a 337-amino-acid chain: tRNA N6-adenosine threonylcarbamoyltransferase (337 aa).

Residues His111 and His115 each coordinate Fe cation. Residues 134–138, Asp167, Gly180, and Asn272 contribute to the substrate site; that span reads LVSGG. Asp300 serves as a coordination point for Fe cation.

This sequence belongs to the KAE1 / TsaD family. Fe(2+) is required as a cofactor.

It localises to the cytoplasm. It carries out the reaction L-threonylcarbamoyladenylate + adenosine(37) in tRNA = N(6)-L-threonylcarbamoyladenosine(37) in tRNA + AMP + H(+). Functionally, required for the formation of a threonylcarbamoyl group on adenosine at position 37 (t(6)A37) in tRNAs that read codons beginning with adenine. Is involved in the transfer of the threonylcarbamoyl moiety of threonylcarbamoyl-AMP (TC-AMP) to the N6 group of A37, together with TsaE and TsaB. TsaD likely plays a direct catalytic role in this reaction. The sequence is that of tRNA N6-adenosine threonylcarbamoyltransferase from Klebsiella pneumoniae (strain 342).